Consider the following 329-residue polypeptide: MASQLTDAFARKFYYLRLSVTDVCNFRCTYCLPDGYKPAGVTNKGFLSLDEIRRVTRAFANLGTEKVRLTGGEPSLRRDFCDIIAAVRENPSIRQIAVTTNGYRLARDVAQWREAGLTAVNVSVDSLDARQFHAITGQDKFRQVMAGIDAAFDAGFEKVKVNTVLMRDVNHHQLDTFLNWIQSRPIQLRFIELMETGEGSDLFRKHHISGATIRDELLKRGWIHQLRSRADGPAQVFCHPDYQGEIGLIMPYEKDFCASCNRLRVSSVGKLHLCLFGDGGVDLRDLLAEEGQQAALMARIETALLGKKQTHFLHQGNTGITQNLSYIGG.

One can recognise a Radical SAM core domain in the interval 8-234 (AFARKFYYLR…QLRSRADGPA (227 aa)). Arginine 17 provides a ligand contact to GTP. Residues cysteine 24 and cysteine 28 each contribute to the [4Fe-4S] cluster site. S-adenosyl-L-methionine is bound at residue tyrosine 30. Cysteine 31 contacts [4Fe-4S] cluster. Residue arginine 68 coordinates GTP. Residue glycine 72 coordinates S-adenosyl-L-methionine. A GTP-binding site is contributed by threonine 99. Serine 123 contributes to the S-adenosyl-L-methionine binding site. Position 160 (lysine 160) interacts with GTP. Position 194 (methionine 194) interacts with S-adenosyl-L-methionine. [4Fe-4S] cluster-binding residues include cysteine 257 and cysteine 260. 262–264 (RLR) provides a ligand contact to GTP. [4Fe-4S] cluster is bound at residue cysteine 274.

The protein belongs to the radical SAM superfamily. MoaA family. As to quaternary structure, monomer and homodimer. [4Fe-4S] cluster serves as cofactor.

It catalyses the reaction GTP + AH2 + S-adenosyl-L-methionine = (8S)-3',8-cyclo-7,8-dihydroguanosine 5'-triphosphate + 5'-deoxyadenosine + L-methionine + A + H(+). The protein operates within cofactor biosynthesis; molybdopterin biosynthesis. Catalyzes the cyclization of GTP to (8S)-3',8-cyclo-7,8-dihydroguanosine 5'-triphosphate. The protein is GTP 3',8-cyclase of Cronobacter sakazakii (strain ATCC BAA-894) (Enterobacter sakazakii).